We begin with the raw amino-acid sequence, 335 residues long: Beta-ketoacyl-[acyl-carrier-protein] synthase III (335 aa).

Catalysis depends on residues C117 and H258. The interval 259–263 is ACP-binding; it reads QANQR. The active site involves N288.

Belongs to the thiolase-like superfamily. FabH family. As to quaternary structure, homodimer.

The protein localises to the cytoplasm. It catalyses the reaction malonyl-[ACP] + acetyl-CoA + H(+) = 3-oxobutanoyl-[ACP] + CO2 + CoA. The protein operates within lipid metabolism; fatty acid biosynthesis. Catalyzes the condensation reaction of fatty acid synthesis by the addition to an acyl acceptor of two carbons from malonyl-ACP. Catalyzes the first condensation reaction which initiates fatty acid synthesis and may therefore play a role in governing the total rate of fatty acid production. Possesses both acetoacetyl-ACP synthase and acetyl transacylase activities. Its substrate specificity determines the biosynthesis of branched-chain and/or straight-chain of fatty acids. The sequence is that of Beta-ketoacyl-[acyl-carrier-protein] synthase III from Synechococcus elongatus (strain ATCC 33912 / PCC 7942 / FACHB-805) (Anacystis nidulans R2).